Consider the following 76-residue polypeptide: Omega-conotoxin MoVIA (76 aa).

The first 22 residues, 1–22, serve as a signal peptide directing secretion; the sequence is MKLTCVVIVAVLFLTACQLITA. Positions 23 to 45 are excised as a propeptide; the sequence is DDSRSTQRHRALRSTTKLSMSTR. 3 disulfides stabilise this stretch: Cys-46-Cys-61, Cys-53-Cys-64, and Cys-60-Cys-71. Residues Pro-49 and Pro-55 each carry the hydroxyproline modification.

The protein belongs to the conotoxin O1 superfamily. Expressed by the venom duct.

Its subcellular location is the secreted. Omega-conotoxins act at presynaptic membranes, they bind and block voltage-gated calcium channels (Cav). This toxin potently blocks mammalian N-type calcium channels (Cav2.2/CACNA1B) (IC(50)=330 nM on human channels). It is 9-fold more potent in displacing radiolabeled omega-conotoxin GVIA from fish brain membranes than from human SH-SY5Y cells. Functionally, omega-conotoxins act at presynaptic membranes, they bind and block voltage-gated calcium channels (Cav). This toxin potently blocks mammalian N-type calcium channels (Cav2.2/CACNA1B) (IC(50)=600 nM on human channels). It is 60-fold more potent in displacing radiolabeled omega-conotoxin GVIA from fish brain membranes than from human SH-SY5Y cells. In vivo, when tested on rat neuropathic pain model, this toxin shows an analgesic activity. This Conus moncuri (Sea snail) protein is Omega-conotoxin MoVIA.